We begin with the raw amino-acid sequence, 103 residues long: Sec-independent protein translocase protein TatA (103 aa).

Residues 1-21 (MGNIFSPTHLIVILLIIIVLF) form a helical membrane-spanning segment. The interval 77 to 103 (KRATTRVKGSSSSRKGKTSVVKKQRVK) is disordered. Positions 90 to 103 (RKGKTSVVKKQRVK) are enriched in basic residues.

Belongs to the TatA/E family. In terms of assembly, the Tat system comprises two distinct complexes: a TatABC complex, containing multiple copies of TatA, TatB and TatC subunits, and a separate TatA complex, containing only TatA subunits. Substrates initially bind to the TatABC complex, which probably triggers association of the separate TatA complex to form the active translocon.

The protein localises to the cell inner membrane. Its function is as follows. Part of the twin-arginine translocation (Tat) system that transports large folded proteins containing a characteristic twin-arginine motif in their signal peptide across membranes. TatA could form the protein-conducting channel of the Tat system. The chain is Sec-independent protein translocase protein TatA from Bartonella henselae (strain ATCC 49882 / DSM 28221 / CCUG 30454 / Houston 1) (Rochalimaea henselae).